Consider the following 365-residue polypeptide: Phospho-N-acetylmuramoyl-pentapeptide-transferase (365 aa).

9 helical membrane passes run 19–39 (LLIL…WLLT), 47–67 (AVIL…FGVI), 91–111 (AGTP…VALI), 115–135 (FDPQ…IGWV), 155–175 (LLLQ…TGSP), 184–204 (GNLI…VLVA), 224–244 (AIAF…LMIF), 281–301 (AVGL…IFFV), and 344–364 (TQIV…GFIS).

This sequence belongs to the glycosyltransferase 4 family. MraY subfamily. The cofactor is Mg(2+).

It is found in the cell inner membrane. It catalyses the reaction UDP-N-acetyl-alpha-D-muramoyl-L-alanyl-gamma-D-glutamyl-meso-2,6-diaminopimeloyl-D-alanyl-D-alanine + di-trans,octa-cis-undecaprenyl phosphate = di-trans,octa-cis-undecaprenyl diphospho-N-acetyl-alpha-D-muramoyl-L-alanyl-D-glutamyl-meso-2,6-diaminopimeloyl-D-alanyl-D-alanine + UMP. The protein operates within cell wall biogenesis; peptidoglycan biosynthesis. Catalyzes the initial step of the lipid cycle reactions in the biosynthesis of the cell wall peptidoglycan: transfers peptidoglycan precursor phospho-MurNAc-pentapeptide from UDP-MurNAc-pentapeptide onto the lipid carrier undecaprenyl phosphate, yielding undecaprenyl-pyrophosphoryl-MurNAc-pentapeptide, known as lipid I. This Gloeothece citriformis (strain PCC 7424) (Cyanothece sp. (strain PCC 7424)) protein is Phospho-N-acetylmuramoyl-pentapeptide-transferase.